Reading from the N-terminus, the 360-residue chain is Photosystem II protein D1 1 (360 aa).

Helical transmembrane passes span 29-46 (YIGWFGVLMIPTLLTATT), 118-133 (HFLIGIFCYLGRQWEL), and 142-156 (WICVAYSAPVAAATA). Histidine 118 provides a ligand contact to chlorophyll a. Position 126 (tyrosine 126) interacts with pheophytin a. 2 residues coordinate [CaMn4O5] cluster: aspartate 170 and glutamate 189. The helical transmembrane segment at 197 to 218 (FHMLGVAGVFGGALFAAMHGSL) threads the bilayer. Histidine 198 serves as a coordination point for chlorophyll a. Residues histidine 215 and 264 to 265 (SF) each bind a quinone. Histidine 215 contacts Fe cation. Histidine 272 is a Fe cation binding site. The helical transmembrane segment at 274-288 (FLGAWPVVGIWFAAL) threads the bilayer. [CaMn4O5] cluster is bound by residues histidine 332, glutamate 333, aspartate 342, and alanine 344. Positions 345-360 (SGDAQMVALNAPAIEG) are excised as a propeptide.

The protein belongs to the reaction center PufL/M/PsbA/D family. PSII is composed of 1 copy each of membrane proteins PsbA, PsbB, PsbC, PsbD, PsbE, PsbF, PsbH, PsbI, PsbJ, PsbK, PsbL, PsbM, PsbT, PsbX, PsbY, PsbZ, Psb30/Ycf12, peripheral proteins PsbO, CyanoQ (PsbQ), PsbU, PsbV and a large number of cofactors. It forms dimeric complexes. It depends on The D1/D2 heterodimer binds P680, chlorophylls that are the primary electron donor of PSII, and subsequent electron acceptors. It shares a non-heme iron and each subunit binds pheophytin, quinone, additional chlorophylls, carotenoids and lipids. D1 provides most of the ligands for the Mn4-Ca-O5 cluster of the oxygen-evolving complex (OEC). There is also a Cl(-1) ion associated with D1 and D2, which is required for oxygen evolution. The PSII complex binds additional chlorophylls, carotenoids and specific lipids. as a cofactor. In terms of processing, C-terminally processed by CtpA; processing is essential to allow assembly of the oxygen-evolving complex and photosynthetic growth. Post-translationally, tyr-161 forms a radical intermediate that is referred to as redox-active TyrZ, YZ or Y-Z. C-terminally processed by CtpA; processing is essential to allow assembly of the oxygen-evolving complex and thus photosynthetic growth.

The protein resides in the cellular thylakoid membrane. The enzyme catalyses 2 a plastoquinone + 4 hnu + 2 H2O = 2 a plastoquinol + O2. Functionally, photosystem II (PSII) is a light-driven water:plastoquinone oxidoreductase that uses light energy to abstract electrons from H(2)O, generating O(2) and a proton gradient subsequently used for ATP formation. It consists of a core antenna complex that captures photons, and an electron transfer chain that converts photonic excitation into a charge separation. The D1/D2 (PsbA/PsbD) reaction center heterodimer binds P680, the primary electron donor of PSII as well as several subsequent electron acceptors. The polypeptide is Photosystem II protein D1 1 (Synechocystis sp. (strain ATCC 27184 / PCC 6803 / Kazusa)).